Consider the following 296-residue polypeptide: Remorin 4.1 (296 aa).

Disordered regions lie at residues 1 to 78, 121 to 142, and 242 to 266; these read MLTL…SGEN, TRIG…DSNP, and EKTQ…EGKR. Residues 21–39 are compositionally biased toward basic and acidic residues; the sequence is ASDRRDETPSSEIVVRDIH. Composition is skewed to polar residues over residues 41–53 and 62–78; these read MTTT…PQQR and PSRS…SGEN. Basic and acidic residues-rich tracts occupy residues 121-135 and 253-266; these read TRIG…HGQV and RKAE…EGKR. The stretch at 226–261 forms a coiled coil; it reads MKKIERKLEDRRAKAMEKTQNKVAKAQRKAEERRAT.

Belongs to the remorin family. In terms of assembly, forms homodimer and heterodimer with REM4.2. Interacts with KIN11. Phosphorylated by KIN11. In terms of processing, probably ubiquitinated and degraded by the 26S proteasome pathway. As to expression, predominantly detected in bud, stem, root, flower, silique, and leaves, and enhanced dramatically in senescence leaf.

The protein localises to the cell membrane. Functionally, collaborates with REM4.2 to positively regulate the BCTV and BSCTV susceptibility. This chain is Remorin 4.1, found in Arabidopsis thaliana (Mouse-ear cress).